The following is a 279-amino-acid chain: Homeobox protein BarH-like 2 (279 aa).

2 disordered regions span residues 110-137 (APGG…RRSR) and 194-279 (KGGQ…PPLS). Over residues 118 to 128 (SSESETEQPTP) the composition is skewed to polar residues. Positions 133 to 192 (PRRSRTIFTELQLMGLEKKFQKQKYLSTPDRLDLAQSLGLTQLQVKTWYQNRRMKWKKMV) form a DNA-binding region, homeobox. A compositionally biased stretch (polar residues) spans 225–240 (NSQAQGQEQLEPSQGQ). Pro residues predominate over residues 261–279 (PPDPPQELPIPSSEPPPLS).

It belongs to the BAR homeobox family. In terms of tissue distribution, highly expressed in adult salivary gland and at much lower levels in mammary gland, kidney and placenta.

The protein localises to the nucleus. Transcription factor. Binds optimally to the DNA consensus sequence 5'-YYTAATGRTTTTY-3'. May control the expression of neural adhesion molecules such as L1 or Ng-CAM during embryonic development of both the central and peripherical nervous system. May be involved in controlling adhesive processes in keratinizing epithelia. The chain is Homeobox protein BarH-like 2 (BARX2) from Homo sapiens (Human).